The primary structure comprises 590 residues: V-type ATP synthase alpha chain (590 aa).

ATP is bound at residue 231–238 (GPFGSGKT).

Belongs to the ATPase alpha/beta chains family.

The enzyme catalyses ATP + H2O + 4 H(+)(in) = ADP + phosphate + 5 H(+)(out). Produces ATP from ADP in the presence of a proton gradient across the membrane. The V-type alpha chain is a catalytic subunit. The protein is V-type ATP synthase alpha chain of Clostridium botulinum (strain Langeland / NCTC 10281 / Type F).